Reading from the N-terminus, the 278-residue chain is HTH-type transcriptional activator RhaS (278 aa).

The HTH araC/xylS-type domain occupies 174–272 (NLLLAWLEDH…NWSPRDIRQG (99 aa)). DNA-binding regions (H-T-H motif) lie at residues 191–212 (DAVA…KQQT) and 239–262 (VTDI…HREF).

As to quaternary structure, binds DNA as a dimer.

The protein resides in the cytoplasm. Functionally, activates expression of the rhaBAD and rhaT operons. This chain is HTH-type transcriptional activator RhaS, found in Shigella boydii serotype 18 (strain CDC 3083-94 / BS512).